The sequence spans 1031 residues: Kinesin heavy chain (1031 aa).

The Kinesin motor domain maps to 8 to 325; it reads NIKVVCRVRP…LMFGQRAKTI (318 aa). An ATP-binding site is contributed by 84–91; it reads GQTSSGKT. Residues 393-857 adopt a coiled-coil conformation; it reads PKQMTVHVSE…RDNADLRCEL (465 aa). Basic and acidic residues predominate over residues 673-686; sequence TDQEDKKREEEDKM. 2 disordered regions span residues 673 to 692 and 906 to 1031; these read TDQE…ATEM and RNFA…EQGS. Positions 858–1031 are globular; that stretch reads PKLERRLRAT…PLTTSGEQGS (174 aa). Gly residues predominate over residues 932 to 949; that stretch reads GSTGIRGGGYSGIRGGGS. Composition is skewed to polar residues over residues 964–977 and 1014–1031; these read SHNN…NPND and RNNT…EQGS.

Belongs to the TRAFAC class myosin-kinesin ATPase superfamily. Kinesin family. Kinesin subfamily. In terms of assembly, oligomer composed of two heavy chains and two light chains.

The protein localises to the cytoplasm. It localises to the cytoskeleton. In terms of biological role, kinesin is a microtubule-associated force-producing protein that may play a role in organelle transport. This Strongylocentrotus purpuratus (Purple sea urchin) protein is Kinesin heavy chain.